A 437-amino-acid chain; its full sequence is GTPase Der (437 aa).

2 consecutive EngA-type G domains span residues 4–167 (PVVA…AEKD) and 175–352 (IRFS…DHQH). GTP-binding positions include 10 to 17 (GRPNVGKS), 57 to 61 (DTGGI), 119 to 122 (NKVD), 181 to 188 (GRPNVGKS), 229 to 233 (DTAGI), and 294 to 297 (NKWD). Residues 353–437 (RRIQSAVLND…PIRLIKRRRK (85 aa)) enclose the KH-like domain.

The protein belongs to the TRAFAC class TrmE-Era-EngA-EngB-Septin-like GTPase superfamily. EngA (Der) GTPase family. As to quaternary structure, associates with the 50S ribosomal subunit.

Functionally, GTPase that plays an essential role in the late steps of ribosome biogenesis. This chain is GTPase Der, found in Limosilactobacillus fermentum (strain NBRC 3956 / LMG 18251) (Lactobacillus fermentum).